Consider the following 196-residue polypeptide: Recombination protein RecR (196 aa).

Residues 57-72 form a C4-type zinc finger; the sequence is CERCHTFTEGAVCETC. A Toprim domain is found at 80–175; the sequence is TRLCVVETPA…HVTRLARGVP (96 aa).

The protein belongs to the RecR family.

Its function is as follows. May play a role in DNA repair. It seems to be involved in an RecBC-independent recombinational process of DNA repair. It may act with RecF and RecO. This Acidovorax sp. (strain JS42) protein is Recombination protein RecR.